The sequence spans 309 residues: Probable HTH-type transcriptional regulator LtrA (309 aa).

Residues 1–61 (MNLNLLPDLA…QRTTRKLRLS (61 aa)) enclose the HTH lysR-type domain. The H-T-H motif DNA-binding region spans 21–40 (FSAVARQNGITPSAVSRSVS).

It belongs to the LysR transcriptional regulatory family.

This chain is Probable HTH-type transcriptional regulator LtrA (ltrA), found in Klebsiella pneumoniae.